A 277-amino-acid polypeptide reads, in one-letter code: NADPH-dependent 7-cyano-7-deazaguanine reductase (277 aa).

83 to 85 (IES) provides a ligand contact to substrate. Residue 85-86 (SK) participates in NADPH binding. Residue Cys184 is the Thioimide intermediate of the active site. Catalysis depends on Asp191, which acts as the Proton donor. Residue 223–224 (HE) coordinates substrate. 252 to 253 (RG) serves as a coordination point for NADPH.

The protein belongs to the GTP cyclohydrolase I family. QueF type 2 subfamily. As to quaternary structure, homodimer.

It is found in the cytoplasm. It catalyses the reaction 7-aminomethyl-7-carbaguanine + 2 NADP(+) = 7-cyano-7-deazaguanine + 2 NADPH + 3 H(+). It participates in tRNA modification; tRNA-queuosine biosynthesis. Its function is as follows. Catalyzes the NADPH-dependent reduction of 7-cyano-7-deazaguanine (preQ0) to 7-aminomethyl-7-deazaguanine (preQ1). The chain is NADPH-dependent 7-cyano-7-deazaguanine reductase from Cupriavidus pinatubonensis (strain JMP 134 / LMG 1197) (Cupriavidus necator (strain JMP 134)).